We begin with the raw amino-acid sequence, 94 residues long: MSRSVKKPPFCAPHVLRLANRVIASNRTSVVINIHSRSSVILNKFVGLTFGVYNGKTYVPVKVTDNIVGRKFGEFSPTRRFLGHAGDKKVSRKG.

It belongs to the universal ribosomal protein uS19 family.

Functionally, protein S19 forms a complex with S13 that binds strongly to the 16S ribosomal RNA. The protein is Small ribosomal subunit protein uS19 of Anaplasma phagocytophilum (strain HZ).